The sequence spans 1903 residues: Plexin-A4 (1903 aa).

The signal sequence occupies residues 1-26; the sequence is MAFHNRRWNFTFSCCVVVLLLPLVAA. Residues 27-515 enclose the Sema domain; that stretch reads RPQQPSAATR…SESQLTRVPV (489 aa). Residues 27–1246 lie on the Extracellular side of the membrane; it reads RPQQPSAATR…ITSDSPLSST (1220 aa). 2 cysteine pairs are disulfide-bonded: cysteine 97-cysteine 106 and cysteine 132-cysteine 140. Residue asparagine 166 is glycosylated (N-linked (GlcNAc...) asparagine). 3 cysteine pairs are disulfide-bonded: cysteine 291-cysteine 413, cysteine 307-cysteine 364, and cysteine 382-cysteine 401. Asparagine 450 is a glycosylation site (N-linked (GlcNAc...) asparagine). The region spanning 517–567 is the PSI 1 domain; sequence ACEQYSSCNECLGSGDPHCGWCVLHSMCTRKEKCERSSEPRRFASNIKQCV. Cystine bridges form between cysteine 518–cysteine 535, cysteine 524–cysteine 566, cysteine 527–cysteine 544, and cysteine 538–cysteine 550. 2 N-linked (GlcNAc...) asparagine glycosylation sites follow: asparagine 575 and asparagine 600. A disulfide bridge connects residues cysteine 601 and cysteine 620. N-linked (GlcNAc...) asparagine glycosylation is found at asparagine 656, asparagine 663, asparagine 764, and asparagine 772. The region spanning 663–710 is the PSI 2 domain; the sequence is NCSVHKSCLSCVGSPYQCHWCKYRHTCTHDPSSCSFQEGRVKQPEECP. Residues 811 to 864 form the PSI 3 domain; the sequence is KCDARRESCGLCLKADPLFGCVWCKGENRCSLKQHCSYPQSMWLEHNGINSKCT. IPT/TIG domains are found at residues 866 to 960, 962 to 1046, 1049 to 1148, and 1151 to 1246; these read PRIT…YYFV, PQLL…FEYV, PTIT…FVYY, and PVFE…LSST. Asparagine 981, asparagine 992, asparagine 1025, asparagine 1141, asparagine 1189, and asparagine 1214 each carry an N-linked (GlcNAc...) asparagine glycan. A helical transmembrane segment spans residues 1247–1267; sequence AVISIAGAGGLLIFFIVIVLI. Over 1268 to 1903 the chain is Cytoplasmic; it reads AYKRKSRESD…QVVAFMSLES (636 aa).

This sequence belongs to the plexin family.

The protein resides in the cell membrane. Its function is as follows. Involved in the development of primary sensory neurons especially in branching of the peripheral axons. Interacts with the SLIT2 signaling specifically to promote axonal branching of Rohon-Beard neurons and the trigeminal sensory ganglion neurons. The sequence is that of Plexin-A4 (plxna4) from Danio rerio (Zebrafish).